The following is a 1097-amino-acid chain: DNA-directed RNA polymerase subunit beta (1097 aa).

Positions 1072–1097 are disordered; the sequence is QDINPRRNTPSRPTYESLGTSEYEED. The segment covering 1077 to 1091 has biased composition (polar residues); that stretch reads RRNTPSRPTYESLGT.

The protein belongs to the RNA polymerase beta chain family. As to quaternary structure, in cyanobacteria the RNAP catalytic core is composed of 2 alpha, 1 beta, 1 beta', 1 gamma and 1 omega subunit. When a sigma factor is associated with the core the holoenzyme is formed, which can initiate transcription.

It carries out the reaction RNA(n) + a ribonucleoside 5'-triphosphate = RNA(n+1) + diphosphate. In terms of biological role, DNA-dependent RNA polymerase catalyzes the transcription of DNA into RNA using the four ribonucleoside triphosphates as substrates. This Prochlorococcus marinus (strain AS9601) protein is DNA-directed RNA polymerase subunit beta.